The chain runs to 241 residues: Uridylate kinase (241 aa).

Position 15 to 18 (15 to 18) interacts with ATP; sequence KLSG. Residue Gly-57 coordinates UMP. ATP contacts are provided by Gly-58 and Arg-62. UMP is bound by residues Asp-77 and 139–146; that span reads IGHTLFTT. Thr-166, Asn-167, Phe-172, and Asp-175 together coordinate ATP.

Belongs to the UMP kinase family. In terms of assembly, homohexamer.

Its subcellular location is the cytoplasm. It carries out the reaction UMP + ATP = UDP + ADP. The protein operates within pyrimidine metabolism; CTP biosynthesis via de novo pathway; UDP from UMP (UMPK route): step 1/1. Inhibited by UTP. Catalyzes the reversible phosphorylation of UMP to UDP. This Wigglesworthia glossinidia brevipalpis protein is Uridylate kinase.